Consider the following 221-residue polypeptide: PKHD-type hydroxylase Pro_1271 (221 aa).

The 95-residue stretch at 80–174 folds into the Fe2OG dioxygenase domain; sequence KVHGVMFSKS…RIVCVGWIQS (95 aa). Residues His98, Asp100, and His155 each contribute to the Fe cation site. Arg165 serves as a coordination point for 2-oxoglutarate.

Fe(2+) is required as a cofactor. The cofactor is L-ascorbate.

The protein is PKHD-type hydroxylase Pro_1271 of Prochlorococcus marinus (strain SARG / CCMP1375 / SS120).